The primary structure comprises 312 residues: MKVAVLGAAGGIGQALALLLKTQLPSGSELSLYDIAPVTPGVAVDLSHIPTAVKIKGFSGEDATPALEGADVVLISAGVARKPGMDRSDLFNVNAGIVKNLVQQVAKTCPKACIGIITNPVNTTVAIAAEVLKKAGVYDKNKLFGVTTLDIIRSNTFVAELKGKQPGEVEVPVIGGHSGVTILPLLSQVPGVSFTEQEVADLTKRIQNAGTEVVEAKAGGGSATLSMGQAAARFGLSLVRALQGEQGVVECAYVEGDGQYARFFSQPLLLGKNGVEERKSIGTLSAFEQSALEGMLDTLKKDIALGEEFVNK.

NAD(+) contacts are provided by residues 7 to 13 (GAAGGIG) and D34. Residues R81 and R87 each coordinate substrate. NAD(+) is bound by residues N94 and 117–119 (ITN). Residues N119 and R153 each contribute to the substrate site. Residue H177 is the Proton acceptor of the active site. M227 serves as a coordination point for NAD(+).

This sequence belongs to the LDH/MDH superfamily. MDH type 1 family. As to quaternary structure, homodimer.

It carries out the reaction (S)-malate + NAD(+) = oxaloacetate + NADH + H(+). Catalyzes the reversible oxidation of malate to oxaloacetate. The polypeptide is Malate dehydrogenase (Escherichia coli (strain 55989 / EAEC)).